The sequence spans 84 residues: Small ribosomal subunit protein bS20 (84 aa).

The interval 1-25 (MPVIKSAMKRVRTSEKAAARNRSQM) is disordered.

This sequence belongs to the bacterial ribosomal protein bS20 family.

Binds directly to 16S ribosomal RNA. This is Small ribosomal subunit protein bS20 from Pediococcus pentosaceus (strain ATCC 25745 / CCUG 21536 / LMG 10740 / 183-1w).